The chain runs to 48 residues: uncharacterized protein (48 aa).

Residues 18–38 (IIIKYWYIDLTITIFAFLILY) form a helical membrane-spanning segment.

Its subcellular location is the host membrane. This is an uncharacterized protein from Acidianus bottle-shaped virus (isolate Italy/Pozzuoli) (ABV).